A 418-amino-acid polypeptide reads, in one-letter code: Putative O-antigen transporter (418 aa).

11 helical membrane-spanning segments follow: residues 8–28 (VWNL…LGFL), 37–57 (FGVY…DVGL), 85–105 (FLVL…DGIV), 124–144 (LLAI…ILEG), 165–185 (IPAI…GLIF), 217–237 (LFFF…MVYF), 251–271 (VAFY…PAAI), 297–317 (LLMF…SGLV), 334–354 (LNVL…FSAI), 362–382 (ITAL…YFMV), and 385–405 (YGLL…ALLL).

This sequence belongs to the polysaccharide synthase family.

The protein localises to the cell inner membrane. The protein operates within bacterial outer membrane biogenesis; lipopolysaccharide biosynthesis. Functionally, could be an O-antigen transporter. The sequence is that of Putative O-antigen transporter (rfbE) from Shigella flexneri.